Here is a 335-residue protein sequence, read N- to C-terminus: GTPase Obg (335 aa).

Positions 1-158 constitute an Obg domain; the sequence is MFVDQITLEL…RLVELELKLI (158 aa). One can recognise an OBG-type G domain in the interval 159–334; sequence ADIGLVGFPN…LHDLFKSKLS (176 aa). GTP is bound by residues 165 to 172, 190 to 194, 215 to 218, 285 to 288, and 315 to 317; these read GFPNAGKS, FTTLH, DIPG, NKID, and SGL. 2 residues coordinate Mg(2+): S172 and T192.

It belongs to the TRAFAC class OBG-HflX-like GTPase superfamily. OBG GTPase family. As to quaternary structure, monomer. It depends on Mg(2+) as a cofactor.

The protein localises to the cytoplasm. In terms of biological role, an essential GTPase which binds GTP, GDP and possibly (p)ppGpp with moderate affinity, with high nucleotide exchange rates and a fairly low GTP hydrolysis rate. Plays a role in control of the cell cycle, stress response, ribosome biogenesis and in those bacteria that undergo differentiation, in morphogenesis control. The polypeptide is GTPase Obg (Chlamydia muridarum (strain MoPn / Nigg)).